We begin with the raw amino-acid sequence, 305 residues long: UDP-3-O-acyl-N-acetylglucosamine deacetylase (305 aa).

The Zn(2+) site is built by histidine 78, histidine 237, and aspartate 241. The Proton donor role is filled by histidine 264.

It belongs to the LpxC family. Zn(2+) is required as a cofactor.

It catalyses the reaction a UDP-3-O-[(3R)-3-hydroxyacyl]-N-acetyl-alpha-D-glucosamine + H2O = a UDP-3-O-[(3R)-3-hydroxyacyl]-alpha-D-glucosamine + acetate. It functions in the pathway glycolipid biosynthesis; lipid IV(A) biosynthesis; lipid IV(A) from (3R)-3-hydroxytetradecanoyl-[acyl-carrier-protein] and UDP-N-acetyl-alpha-D-glucosamine: step 2/6. Functionally, catalyzes the hydrolysis of UDP-3-O-myristoyl-N-acetylglucosamine to form UDP-3-O-myristoylglucosamine and acetate, the committed step in lipid A biosynthesis. In Burkholderia mallei (strain NCTC 10247), this protein is UDP-3-O-acyl-N-acetylglucosamine deacetylase.